The chain runs to 85 residues: uncharacterized protein (85 aa).

This is an uncharacterized protein from Sinorhizobium fredii (strain NBRC 101917 / NGR234).